Here is a 169-residue protein sequence, read N- to C-terminus: Sec-independent protein translocase protein TatB (169 aa).

The chain crosses the membrane as a helical span at residues 1 to 21; sequence MFDIGFLELAVIAVIGLIVIG. A disordered region spans residues 98–169; that stretch reads EAEEAKLQTP…TTKTEPANDR (72 aa). Over residues 134 to 143 the composition is skewed to basic and acidic residues; it reads PPEEPSKVEA. The segment covering 146–169 has biased composition (polar residues); it reads SAETPQANNQDQQPTTKTEPANDR.

The protein belongs to the TatB family. As to quaternary structure, the Tat system comprises two distinct complexes: a TatABC complex, containing multiple copies of TatA, TatB and TatC subunits, and a separate TatA complex, containing only TatA subunits. Substrates initially bind to the TatABC complex, which probably triggers association of the separate TatA complex to form the active translocon.

The protein localises to the cell inner membrane. In terms of biological role, part of the twin-arginine translocation (Tat) system that transports large folded proteins containing a characteristic twin-arginine motif in their signal peptide across membranes. Together with TatC, TatB is part of a receptor directly interacting with Tat signal peptides. TatB may form an oligomeric binding site that transiently accommodates folded Tat precursor proteins before their translocation. In Saccharophagus degradans (strain 2-40 / ATCC 43961 / DSM 17024), this protein is Sec-independent protein translocase protein TatB.